We begin with the raw amino-acid sequence, 174 residues long: Gamma-crystallin A (174 aa).

Beta/gamma crystallin 'Greek key' domains lie at glycine 2–serine 40 and glycine 41–proline 83. The tract at residues histidine 84–serine 87 is connecting peptide. 2 Beta/gamma crystallin 'Greek key' domains span residues histidine 88–glutamate 128 and glycine 129–threonine 171.

Belongs to the beta/gamma-crystallin family. Monomer.

Its function is as follows. Crystallins are the dominant structural components of the vertebrate eye lens. The sequence is that of Gamma-crystallin A (CRYGA) from Homo sapiens (Human).